Consider the following 350-residue polypeptide: Ketol-acid reductoisomerase (NADP(+)) (350 aa).

One can recognise a KARI N-terminal Rossmann domain in the interval Val4 to Thr187. Residues Tyr30–Gln33, Arg53, Thr58, and Asp88–Gln91 contribute to the NADP(+) site. Residue His113 is part of the active site. Gly139 is a binding site for NADP(+). The 146-residue stretch at Thr188–Leu333 folds into the KARI C-terminal knotted domain. The Mg(2+) site is built by Asp196, Glu200, Glu232, and Glu236. Residue Ser257 coordinates substrate.

The protein belongs to the ketol-acid reductoisomerase family. Mg(2+) serves as cofactor.

The enzyme catalyses (2R)-2,3-dihydroxy-3-methylbutanoate + NADP(+) = (2S)-2-acetolactate + NADPH + H(+). It carries out the reaction (2R,3R)-2,3-dihydroxy-3-methylpentanoate + NADP(+) = (S)-2-ethyl-2-hydroxy-3-oxobutanoate + NADPH + H(+). It functions in the pathway amino-acid biosynthesis; L-isoleucine biosynthesis; L-isoleucine from 2-oxobutanoate: step 2/4. It participates in amino-acid biosynthesis; L-valine biosynthesis; L-valine from pyruvate: step 2/4. Functionally, involved in the biosynthesis of branched-chain amino acids (BCAA). Catalyzes an alkyl-migration followed by a ketol-acid reduction of (S)-2-acetolactate (S2AL) to yield (R)-2,3-dihydroxy-isovalerate. In the isomerase reaction, S2AL is rearranged via a Mg-dependent methyl migration to produce 3-hydroxy-3-methyl-2-ketobutyrate (HMKB). In the reductase reaction, this 2-ketoacid undergoes a metal-dependent reduction by NADPH to yield (R)-2,3-dihydroxy-isovalerate. The protein is Ketol-acid reductoisomerase (NADP(+)) of Xylella fastidiosa (strain 9a5c).